Consider the following 245-residue polypeptide: Acetylglutamate kinase (245 aa).

Substrate contacts are provided by residues 41 to 42 (GG), Arg63, and Asn156.

Belongs to the acetylglutamate kinase family. ArgB subfamily.

It is found in the cytoplasm. The catalysed reaction is N-acetyl-L-glutamate + ATP = N-acetyl-L-glutamyl 5-phosphate + ADP. The protein operates within amino-acid biosynthesis; L-arginine biosynthesis; N(2)-acetyl-L-ornithine from L-glutamate: step 2/4. Catalyzes the ATP-dependent phosphorylation of N-acetyl-L-glutamate. The protein is Acetylglutamate kinase of Streptococcus sanguinis (strain SK36).